The chain runs to 327 residues: Glycoprotein integral membrane protein 1 (327 aa).

The signal sequence occupies residues 1-23; it reads MEGGLSAPLSVRLLLFIALPAAG. The Extracellular portion of the chain corresponds to 24-259; the sequence is WLTTNAPRPP…LCRFWSSVVP (236 aa). 3 N-linked (GlcNAc...) asparagine glycosylation sites follow: Asn44, Asn62, and Asn146. The chain crosses the membrane as a helical span at residues 260–280; it reads VLFMFLDVMVVGVLGAAGVIA. Topologically, residues 281–327 are cytoplasmic; that stretch reads VLKLLFPVCENKGILQVDKMNGISVPIILYPDGSEKTAQKLTDKTDI.

It localises to the membrane. The protein is Glycoprotein integral membrane protein 1 (Ginm1) of Mus musculus (Mouse).